Consider the following 506-residue polypeptide: Glycerol kinase (506 aa).

T11 provides a ligand contact to ADP. Residues T11, S12, and S13 each coordinate ATP. Sn-glycerol 3-phosphate is bound at residue T11. An ADP-binding site is contributed by R15. 4 residues coordinate sn-glycerol 3-phosphate: R81, E82, Y133, and D242. Residues R81, E82, Y133, D242, and Q243 each coordinate glycerol. Residues T264 and G316 each contribute to the ADP site. T264, G316, Q320, and G421 together coordinate ATP. 2 residues coordinate ADP: G421 and N425.

Belongs to the FGGY kinase family.

It catalyses the reaction glycerol + ATP = sn-glycerol 3-phosphate + ADP + H(+). The protein operates within polyol metabolism; glycerol degradation via glycerol kinase pathway; sn-glycerol 3-phosphate from glycerol: step 1/1. Inhibited by fructose 1,6-bisphosphate (FBP). Its function is as follows. Key enzyme in the regulation of glycerol uptake and metabolism. Catalyzes the phosphorylation of glycerol to yield sn-glycerol 3-phosphate. This Paracidovorax citrulli (strain AAC00-1) (Acidovorax citrulli) protein is Glycerol kinase.